A 458-amino-acid polypeptide reads, in one-letter code: Sugar transporter ERD6-like 10 (458 aa).

The next 12 membrane-spanning stretches (helical) occupy residues 17-37 (ITAC…SYGC), 66-86 (FLNL…VILG), 96-116 (LFCI…WLDL), 119-139 (ISLG…IAEI), 150-170 (ASTL…GTVI), 174-194 (VLAV…YFIP), 257-277 (LVVG…GITY), 292-312 (LGSM…LILV), 319-339 (PLLL…GVSF), 350-370 (FIPV…AIGI), 393-413 (IVAL…NFMF), and 419-439 (GTFY…WMLV).

It belongs to the major facilitator superfamily. Sugar transporter (TC 2.A.1.1) family.

It localises to the membrane. In terms of biological role, sugar transporter. This is Sugar transporter ERD6-like 10 from Arabidopsis thaliana (Mouse-ear cress).